The chain runs to 515 residues: Histidine ammonia-lyase (515 aa).

A cross-link (5-imidazolinone (Ala-Gly)) is located at residues 148–150 (ASG). S149 bears the 2,3-didehydroalanine (Ser) mark.

Belongs to the PAL/histidase family. In terms of processing, contains an active site 4-methylidene-imidazol-5-one (MIO), which is formed autocatalytically by cyclization and dehydration of residues Ala-Ser-Gly.

The protein localises to the cytoplasm. It catalyses the reaction L-histidine = trans-urocanate + NH4(+). It functions in the pathway amino-acid degradation; L-histidine degradation into L-glutamate; N-formimidoyl-L-glutamate from L-histidine: step 1/3. This Pseudomonas syringae pv. tomato (strain ATCC BAA-871 / DC3000) protein is Histidine ammonia-lyase.